The chain runs to 101 residues: MKILVKIRLTRVGTHKKPFFRIVVMDAKAKANGAYIENLGHYDPVLGKVVLKKEAILAQLQNGAQPSETVKNILSQEGIWKEFIALKDANKKRKAALAKAK.

This sequence belongs to the bacterial ribosomal protein bS16 family.

The sequence is that of Small ribosomal subunit protein bS16 from Ureaplasma urealyticum serovar 10 (strain ATCC 33699 / Western).